The sequence spans 510 residues: MDIRAAEISAILKDQIKNYGAEAKVSDVGSVLSVGDGIARVYGLDEVKAGELVEFPGGIKGMALNLERDNVGCVIFGDDRGIKEGDTVKRLGSIVDTSVGKGLLGRVVDGLGEPIDGKGPLKGVAERRRVDVKAPGIIPRKSVHEPMATGIKAIDAMIPVGRGQRELIIGDRQTGKTAIALDTILNQKAINEGDDESAKLYCIYVAVGQKRSTVAQIVKTLEENGALDYTIIVAATASDPAPMQFLAPFTACAMAEYFRDNGMHALIVYDDLSKQAVAYRQMSLLLRRPPGREAYPGDVFYLHSRLLERAAKLNEANGSGSMTALPIIETQANDVSAYIPTNVISITDGQIFLETDLFYQGIRPAVNVGLSVSRVGSAAQTKAMKQVAGKMKGELAQYREMAAFAQFGSDLDAATQKLLNRGQRLTELLKQPQFSPLSMEEQVCVIYAGTRGYLDKLPTSDVQRYEADLLRHLHGEHAALLASIRTEKKLTDDSESQLKAALAKFTEHFA.

ATP is bound at residue 170 to 177 (GDRQTGKT).

It belongs to the ATPase alpha/beta chains family. F-type ATPases have 2 components, CF(1) - the catalytic core - and CF(0) - the membrane proton channel. CF(1) has five subunits: alpha(3), beta(3), gamma(1), delta(1), epsilon(1). CF(0) has three main subunits: a(1), b(2) and c(9-12). The alpha and beta chains form an alternating ring which encloses part of the gamma chain. CF(1) is attached to CF(0) by a central stalk formed by the gamma and epsilon chains, while a peripheral stalk is formed by the delta and b chains.

The protein localises to the cell inner membrane. The enzyme catalyses ATP + H2O + 4 H(+)(in) = ADP + phosphate + 5 H(+)(out). Produces ATP from ADP in the presence of a proton gradient across the membrane. The alpha chain is a regulatory subunit. The polypeptide is ATP synthase subunit alpha (Maricaulis maris (strain MCS10) (Caulobacter maris)).